The sequence spans 373 residues: Potential protein lysine methyltransferase SET6 (373 aa).

An SET domain is found at 12-338 (PFFQVRQTKW…KDEQICIDYS (327 aa)).

This sequence belongs to the class V-like SAM-binding methyltransferase superfamily.

Functionally, involved in resistance to compounds that target ergosterol biosynthesis, including fenpropimorph, dyclonine, and alverine citrate. Since a deletion in the absence of these compounds does not have an effect on growth, is more likely to be involved in compound availability. The chain is Potential protein lysine methyltransferase SET6 (SET6) from Saccharomyces cerevisiae (strain ATCC 204508 / S288c) (Baker's yeast).